The chain runs to 743 residues: Putative cation exchanger C3A12.06c (743 aa).

13 consecutive transmembrane segments (helical) span residues 13-33 (LILL…HRIS), 109-129 (FPVL…IGIS), 138-158 (LVTI…TFLA), 182-202 (IGEL…SVCL), 213-233 (FLRD…FVLH), 239-258 (IWQS…FVFF), 528-548 (LRLL…ITGG), 551-571 (LYIY…LYYY), 580-600 (FLPW…STIA), 609-629 (ALGV…FAAG), 649-669 (MAMG…IGIS), 690-710 (LSIT…YVPL), and 718-738 (VLGL…IVVE).

This sequence belongs to the Ca(2+):cation antiporter (CaCA) (TC 2.A.19) family.

The protein localises to the endoplasmic reticulum membrane. In terms of biological role, putative cation exchanger. This Schizosaccharomyces pombe (strain 972 / ATCC 24843) (Fission yeast) protein is Putative cation exchanger C3A12.06c.